A 545-amino-acid polypeptide reads, in one-letter code: Probable quinate permease (545 aa).

Topologically, residues 1 to 22 are cytoplasmic; the sequence is MSILSLVEDRPTPKEVYNWRIY. The chain crosses the membrane as a helical span at residues 23-43; it reads LLAAVASFTSCMIGYDSAFIG. The Extracellular segment spans residues 44 to 66; it reads TTISLQSFKDEFNWDAMSTDKQN. A helical membrane pass occupies residues 67–87; that stretch reads LISANIVSLYQAGAFFGAFFA. Topologically, residues 88–97 are cytoplasmic; sequence YPMGHFWGRR. Residues 98-118 form a helical membrane-spanning segment; sequence WGLFVAALVFTLGAGLMLGAN. Residues 119 to 130 lie on the Extracellular side of the membrane; it reads GDRGLGLIYGGR. A helical membrane pass occupies residues 131–151; sequence VLAGLGVGAGSNITPIYISEL. At 152 to 159 the chain is on the cytoplasmic side; the sequence is APPAIRGR. The helical transmembrane segment at 160–180 threads the bilayer; the sequence is LVGVYELGWQIGGLVGFWICF. The Extracellular segment spans residues 181–193; sequence GVDDTLAPSHKQW. A helical transmembrane segment spans residues 194 to 214; the sequence is IIPFAVQLIPSGLLLLGILFV. Topologically, residues 215-285 are cytoplasmic; it reads RESPRWLFLR…VWSNKRIMYR (71 aa). A helical membrane pass occupies residues 286–306; the sequence is LFLGSMLFLWQNGSGINAINY. Residues 307 to 325 are Extracellular-facing; it reads YSPTVFKSIGLRGANTSLL. Residues 326-346 traverse the membrane as a helical segment; that stretch reads TTGIFGVVKTVVTFVWLLWLI. Residues 347–352 are Cytoplasmic-facing; sequence DRLGRR. The chain crosses the membrane as a helical span at residues 353–373; the sequence is LLLMIGAAGGSVCLWIVGAYI. Over 374–384 the chain is Extracellular; the sequence is KVAKPTERDPD. A helical transmembrane segment spans residues 385–405; sequence APLDGGGIAAMFFFYLWTVFY. Topologically, residues 406–457 are cytoplasmic; sequence TPSWNGTPWVMNSEMFDPNVRSLAQACAAGSNWLWNFLISRFTPQMFAKMEY. A helical transmembrane segment spans residues 458 to 478; that stretch reads GVYFFFASLMILSIVFVFFLI. At 479–545 the chain is on the extracellular side; the sequence is PETKGIPLES…VEQAESVPKA (67 aa). Residues 520–545 are disordered; it reads IEESGYTKSDAQQVERVEQAESVPKA.

It belongs to the major facilitator superfamily. Sugar transporter (TC 2.A.1.1) family. Interacts with creB. Post-translationally, ubiquitinated. Deubiquitinated by creB, probably to control its activity or amount.

Its subcellular location is the cell membrane. Functionally, integral membrane transporter that imports quinic acid to be catabolized as a carbon source. This is Probable quinate permease (qutD) from Aspergillus terreus (strain NIH 2624 / FGSC A1156).